A 331-amino-acid polypeptide reads, in one-letter code: tRNA (guanine-N(7)-)-methyltransferase (331 aa).

Residues Glu29, Glu55, and Asp105 each contribute to the S-adenosyl-L-methionine site. Asp105 is an active-site residue. Positions 109 and 141 each coordinate substrate.

This sequence belongs to the class I-like SAM-binding methyltransferase superfamily. TrmB family.

The catalysed reaction is guanosine(46) in tRNA + S-adenosyl-L-methionine = N(7)-methylguanosine(46) in tRNA + S-adenosyl-L-homocysteine. It functions in the pathway tRNA modification; N(7)-methylguanine-tRNA biosynthesis. Functionally, catalyzes the formation of N(7)-methylguanine at position 46 (m7G46) in tRNA. This chain is tRNA (guanine-N(7)-)-methyltransferase, found in Deinococcus geothermalis (strain DSM 11300 / CIP 105573 / AG-3a).